The sequence spans 393 residues: Stearoyl-[acyl-carrier-protein] 9-desaturase, chloroplastic (393 aa).

A chloroplast-targeting transit peptide spans 1 to 30 (MALNINGVSLKSHKMLPFPCSSARSERVFM). 5 residues coordinate Fe cation: Glu135, Glu173, His176, Glu259, and His262.

It belongs to the fatty acid desaturase type 2 family. Homodimer. Requires Fe(2+) as cofactor.

The protein resides in the plastid. Its subcellular location is the chloroplast. The catalysed reaction is octadecanoyl-[ACP] + 2 reduced [2Fe-2S]-[ferredoxin] + O2 + 2 H(+) = (9Z)-octadecenoyl-[ACP] + 2 oxidized [2Fe-2S]-[ferredoxin] + 2 H2O. It functions in the pathway lipid metabolism; fatty acid metabolism. Its function is as follows. Converts stearoyl-ACP to oleoyl-ACP by introduction of a cis double bond between carbons 9 and 10 of the acyl chain. The sequence is that of Stearoyl-[acyl-carrier-protein] 9-desaturase, chloroplastic from Solanum tuberosum (Potato).